The primary structure comprises 254 residues: 3-deoxy-manno-octulosonate cytidylyltransferase (254 aa).

This sequence belongs to the KdsB family.

The protein resides in the cytoplasm. The enzyme catalyses 3-deoxy-alpha-D-manno-oct-2-ulosonate + CTP = CMP-3-deoxy-beta-D-manno-octulosonate + diphosphate. It participates in nucleotide-sugar biosynthesis; CMP-3-deoxy-D-manno-octulosonate biosynthesis; CMP-3-deoxy-D-manno-octulosonate from 3-deoxy-D-manno-octulosonate and CTP: step 1/1. Its pathway is bacterial outer membrane biogenesis; lipopolysaccharide biosynthesis. Functionally, activates KDO (a required 8-carbon sugar) for incorporation into bacterial lipopolysaccharide in Gram-negative bacteria. This chain is 3-deoxy-manno-octulosonate cytidylyltransferase, found in Haemophilus influenzae (strain 86-028NP).